The primary structure comprises 109 residues: Ig kappa chain V region K16-167 (109 aa).

Residues 1-23 form a framework-1 region; the sequence is ALVMTQTPSPVSAAVGGTVTISC. Positions 24–35 are complementarity-determining-1; that stretch reads QASQSVYSNNLS. The segment at 36–50 is framework-2; sequence WFQQKPGQPPKLLIY. Positions 51 to 57 are complementarity-determining-2; it reads KASTLAS. The segment at 58–89 is framework-3; that stretch reads GVPSRFKGSGSGTQFTLPISGVECDDAATYYC. Residues 90 to 99 form a complementarity-determining-3 region; the sequence is QGTNTGNNIV. The tract at residues 100–109 is framework-4; the sequence is FGTGTEVVVK.

This chain is Ig kappa chain V region K16-167, found in Oryctolagus cuniculus (Rabbit).